A 337-amino-acid polypeptide reads, in one-letter code: Glyceraldehyde-3-phosphate dehydrogenase 2 (337 aa).

Residues 11-12, D35, R80, and T122 each bind NADP(+); that span reads RI. D-glyceraldehyde 3-phosphate contacts are provided by residues 153-155, T184, R199, 212-213, and R235; these read SCT and TG. C154 serves as the catalytic Nucleophile. N317 is a binding site for NADP(+).

As to quaternary structure, homotetramer.

It localises to the cytoplasm. The enzyme catalyses D-glyceraldehyde 3-phosphate + phosphate + NADP(+) = (2R)-3-phospho-glyceroyl phosphate + NADPH + H(+). It carries out the reaction D-glyceraldehyde 3-phosphate + phosphate + NAD(+) = (2R)-3-phospho-glyceroyl phosphate + NADH + H(+). The protein operates within carbohydrate biosynthesis; Calvin cycle. Functionally, gap2 has a major role in carbon fixation as a component of the Calvin cycle. Catalyzes the oxidative phosphorylation of glyceraldehyde 3-phosphate (G3P) to 1,3-bisphosphoglycerate (BPG) using the cofactor NADP. The first reaction step involves the formation of a hemiacetal intermediate between G3P and a cysteine residue, and this hemiacetal intermediate is then oxidized to a thioester, with concomitant reduction of NADP to NADPH. The reduced NADPH is then exchanged with the second NAD, and the thioester is attacked by a nucleophilic inorganic phosphate to produce BPG. This Nostoc sp. (strain PCC 7120 / SAG 25.82 / UTEX 2576) protein is Glyceraldehyde-3-phosphate dehydrogenase 2 (gap2).